Here is a 1114-residue protein sequence, read N- to C-terminus: Brother of CDO (1114 aa).

A signal peptide spans 1 to 30 (MLRGTMTAWRGMRPEVTLACLLLATAGCFA). The Extracellular portion of the chain corresponds to 31 to 855 (DLNEVPQVTV…MVARSSDLPY (825 aa)). Ig-like C2-type domains are found at residues 36 to 123 (PQVT…ATVT), 129 to 213 (DFKL…VKTS), 235 to 315 (PEAQ…VILY), and 323 to 409 (PEVT…LRTS). Disulfide bonds link Cys57-Cys106, Cys150-Cys200, Cys252-Cys299, and Cys344-Cys391. N-linked (GlcNAc...) asparagine glycans are attached at residues Asn65, Asn76, Asn98, Asn189, and Asn275. The disordered stretch occupies residues 422–474 (ELATGTPPVSPSKLGNPEQMLRGQPALPRPPTSVGPASPQCPGEKGQGAPAEA). Fibronectin type-III domains follow at residues 474 to 571 (APII…GRRP), 608 to 703 (APDR…VVSG), and 712 to 812 (PVAG…TKAR). The N-linked (GlcNAc...) asparagine glycan is linked to Asn517. Residues 577–615 (ASKEQQIQRDDPGASPQSSSQPDHGRLSPPEAPDRPTIS) are disordered. 2 N-linked (GlcNAc...) asparagine glycosylation sites follow: Asn725 and Asn759. The interval 812 to 833 (RKSSGQPGRLPPPTLAPPQPPL) is disordered. A compositionally biased stretch (pro residues) spans 820–833 (RLPPPTLAPPQPPL). The helical transmembrane segment at 856–876 (LIVGVVLGSIVLIIVTFIPFC) threads the bilayer. The Cytoplasmic portion of the chain corresponds to 877-1114 (LWRAWSKQKH…VSFETPPLTI (238 aa)). Polar residues predominate over residues 972-986 (QTHLGNGYDPQSHQI). A disordered region spans residues 972 to 998 (QTHLGNGYDPQSHQITRGPKSSPDEGS).

Part of a complex that contains BOC, CDON, NEO1, cadherins and CTNNB1. Interacts with NTN3. Interacts with SHH, DHH and IHH. Interacts with CDH2 and CTNNB1. Interacts with CDH15 only during the early stages of myoblast differentiation. Post-translationally, N-glycosylated. In terms of tissue distribution, detected in skeletal muscle, heart, thymus, kidney and small intestine. Detected at lower levels in brain, placenta, lung and colon mucosa.

The protein resides in the cell membrane. Functionally, component of a cell-surface receptor complex that mediates cell-cell interactions between muscle precursor cells. Promotes differentiation of myogenic cells. This chain is Brother of CDO (BOC), found in Homo sapiens (Human).